Reading from the N-terminus, the 287-residue chain is mRNA-capping enzyme regulatory subunit OPG124 (287 aa).

It belongs to the orthopoxvirus mRNA-capping enzyme regulatory subunit family. In terms of assembly, interacts with the late transcription elongation factor VLTF-4/OPG110. Interacts with the late transcription factors VLTF-1.

The protein resides in the virion. Its function is as follows. Acts with RNA polymerase to initiate transcription from late gene promoters. This is mRNA-capping enzyme regulatory subunit OPG124 (OPG124) from Monkeypox virus.